We begin with the raw amino-acid sequence, 186 residues long: MTVIADVISDASQRMSKTLEAAKEDFGTVSAGRANPALFQKVLVDYYGSPTPLAQLAGLQNPEARVLIVTPYDKGALKEIERAIVTMPSMSANVGNDGEIVRVTLPELTEDRRKEFVKIVRGKGEDAKVAIRNIRRRAKDELDALKGEVGDDEVARGEKELEALTRTNVDLVDEALKRKEAELLEV.

This sequence belongs to the RRF family.

Its subcellular location is the cytoplasm. In terms of biological role, responsible for the release of ribosomes from messenger RNA at the termination of protein biosynthesis. May increase the efficiency of translation by recycling ribosomes from one round of translation to another. The chain is Ribosome-recycling factor from Leifsonia xyli subsp. xyli (strain CTCB07).